We begin with the raw amino-acid sequence, 394 residues long: Class II hydrophobin TH1 (394 aa).

The signal sequence occupies residues 1-16 (MKFLAAASLLVASTLA). Residues 17–42 (VPTSSGGSCRPRPPPGGGNGGNGGNG) form a disordered region. Over residues 33–42 (GGNGGNGGNG) the composition is skewed to gly residues. The interval 48–117 (GYQPCPAGLY…GQAVLCQDSI (70 aa)) is hydrophobin 1. 4 disulfide bridges follow: C52–C101, C62–C92, C63–C75, and C102–C113. Positions 135–157 (GNGGNNGGNTDYPGGNGGNNGGN) are disordered. A compositionally biased stretch (gly residues) spans 148–157 (GGNGGNNGGN). 2 hydrophobin regions span residues 200–270 (GYQA…QPAI) and 326–394 (GSFK…CTGA).

This sequence belongs to the cerato-ulmin hydrophobin family. Homotetramer. Further self-assembles to form highly ordered films at water-air interfaces through intermolecular interactions. Several N-termini starting at positions 17, 20, 22, 28 and 48 have been identified by direct sequencing. Post-translationally, contains a number of intrachain disulfide bonds. In terms of processing, not glycosylated.

It localises to the secreted. The protein resides in the cell wall. Functionally, aerial growth, conidiation, and dispersal of filamentous fungi in the environment rely upon a capability of their secreting small amphipathic proteins called hydrophobins (HPBs) with low sequence identity. Class I can self-assemble into an outermost layer of rodlet bundles on aerial cell surfaces, conferring cellular hydrophobicity that supports fungal growth, development and dispersal; whereas Class II form highly ordered films at water-air interfaces through intermolecular interactions but contribute nothing to the rodlet structure. TH1 is a class II hydrophobin that reduces water surface tension dramatically upon assembly at the water-air interface and plays a role in the formation of aerial hyphae. The sequence is that of Class II hydrophobin TH1 (TH1) from Claviceps fusiformis (Ergot fungus).